The primary structure comprises 149 residues: Large ribosomal subunit protein bL9 (149 aa).

This sequence belongs to the bacterial ribosomal protein bL9 family.

Functionally, binds to the 23S rRNA. The protein is Large ribosomal subunit protein bL9 of Xanthomonas oryzae pv. oryzae (strain MAFF 311018).